Consider the following 362-residue polypeptide: Ferrochelatase (362 aa).

Residues His-228 and Glu-309 each coordinate Fe cation.

It belongs to the ferrochelatase family.

It is found in the cytoplasm. It carries out the reaction heme b + 2 H(+) = protoporphyrin IX + Fe(2+). Its pathway is porphyrin-containing compound metabolism; protoheme biosynthesis; protoheme from protoporphyrin-IX: step 1/1. Catalyzes the ferrous insertion into protoporphyrin IX. This Bordetella pertussis (strain Tohama I / ATCC BAA-589 / NCTC 13251) protein is Ferrochelatase.